The sequence spans 155 residues: MRFLITNEVKSVFNDEIYLQRFEQIANLISIKLNIDKERFFECHFVDEKTIQEINRDYRNKDYITDVISFAFDDGEIITPLLGEMYICYQKVVNQAKEFGHSFERELCFLFTHGLLHLLGYDHIEVEEEKIMFGLQDEILNELNITRNVNGNKNG.

His113, His117, and His123 together coordinate Zn(2+).

This sequence belongs to the endoribonuclease YbeY family. It depends on Zn(2+) as a cofactor.

Its subcellular location is the cytoplasm. Single strand-specific metallo-endoribonuclease involved in late-stage 70S ribosome quality control and in maturation of the 3' terminus of the 16S rRNA. This is Endoribonuclease YbeY from Ureaplasma urealyticum serovar 10 (strain ATCC 33699 / Western).